The chain runs to 141 residues: MSLQISILTPERPFWNGQADEIILPTETGEMGVLKNHAPIITGLNVGAMLIRGGQASGSKDEWNSYAIMGGFALVKQNQVTILANEAVSAENINPEEAKDAFETAKANLEKAEGVKEKVEANFAYKRAKARYQVVKVLKKI.

The protein belongs to the ATPase epsilon chain family. In terms of assembly, F-type ATPases have 2 components, F(1) - the catalytic core - and F(0) - the membrane proton channel. F(1) has five subunits: alpha(3), beta(3), gamma(1), delta(1), epsilon(1). F(0) has four main subunits: a(1), b(1), b'(1) and c(10-14). The alpha and beta chains form an alternating ring which encloses part of the gamma chain. F(1) is attached to F(0) by a central stalk formed by the gamma and epsilon chains, while a peripheral stalk is formed by the delta, b and b' chains.

It localises to the plastid. It is found in the chloroplast thylakoid membrane. In terms of biological role, f(1)F(0) ATP synthase produces ATP from ADP in the presence of a proton or sodium gradient. F-type ATPases consist of two structural domains, F(1) containing the extramembraneous catalytic core and F(0) containing the membrane proton channel, linked together by a central stalk and a peripheral stalk. During catalysis, ATP synthesis in the catalytic domain of F(1) is coupled via a rotary mechanism of the central stalk subunits to proton translocation. This chain is ATP synthase epsilon chain, chloroplastic, found in Chlamydomonas reinhardtii (Chlamydomonas smithii).